The chain runs to 374 residues: Dual-specificity RNA methyltransferase RlmN (374 aa).

Glu-91 functions as the Proton acceptor in the catalytic mechanism. The 244-residue stretch at 97–340 folds into the Radical SAM core domain; that stretch reads EDDRGTLCIS…TTVRKTRGDD (244 aa). An intrachain disulfide couples Cys-104 to Cys-345. Residues Cys-111, Cys-115, and Cys-118 each contribute to the [4Fe-4S] cluster site. Residues 165 to 166, Ser-197, 219 to 221, and Asn-302 each bind S-adenosyl-L-methionine; these read GE and SLH. Cys-345 acts as the S-methylcysteine intermediate in catalysis.

Belongs to the radical SAM superfamily. RlmN family. Requires [4Fe-4S] cluster as cofactor.

The protein resides in the cytoplasm. It carries out the reaction adenosine(2503) in 23S rRNA + 2 reduced [2Fe-2S]-[ferredoxin] + 2 S-adenosyl-L-methionine = 2-methyladenosine(2503) in 23S rRNA + 5'-deoxyadenosine + L-methionine + 2 oxidized [2Fe-2S]-[ferredoxin] + S-adenosyl-L-homocysteine. The catalysed reaction is adenosine(37) in tRNA + 2 reduced [2Fe-2S]-[ferredoxin] + 2 S-adenosyl-L-methionine = 2-methyladenosine(37) in tRNA + 5'-deoxyadenosine + L-methionine + 2 oxidized [2Fe-2S]-[ferredoxin] + S-adenosyl-L-homocysteine. Specifically methylates position 2 of adenine 2503 in 23S rRNA and position 2 of adenine 37 in tRNAs. m2A2503 modification seems to play a crucial role in the proofreading step occurring at the peptidyl transferase center and thus would serve to optimize ribosomal fidelity. This chain is Dual-specificity RNA methyltransferase RlmN, found in Acidovorax sp. (strain JS42).